A 426-amino-acid polypeptide reads, in one-letter code: Deoxyguanosinetriphosphate triphosphohydrolase-like protein (426 aa).

Residues 1-23 (MYPYSESDAQRLHQEAPKASQLA) are disordered. Positions 67-217 (RLTHSLEVAQ…MDFSDDIAYS (151 aa)) constitute an HD domain.

Belongs to the dGTPase family. Type 2 subfamily.

This chain is Deoxyguanosinetriphosphate triphosphohydrolase-like protein, found in Corynebacterium efficiens (strain DSM 44549 / YS-314 / AJ 12310 / JCM 11189 / NBRC 100395).